The sequence spans 434 residues: Maltoporin (434 aa).

Residues methionine 1–alanine 25 form the signal peptide.

Belongs to the porin LamB (TC 1.B.3) family. As to quaternary structure, homotrimer formed of three 18-stranded antiparallel beta-barrels, containing three independent channels.

The protein localises to the cell outer membrane. The catalysed reaction is beta-maltose(in) = beta-maltose(out). Involved in the transport of maltose and maltodextrins. The chain is Maltoporin from Aeromonas hydrophila.